Reading from the N-terminus, the 90-residue chain is Small ribosomal subunit protein uS15c (90 aa).

In terms of assembly, component of the chloroplast small ribosomal subunit (SSU). Mature 70S chloroplast ribosomes of higher plants consist of a small (30S) and a large (50S) subunit. The 30S small subunit contains 1 molecule of ribosomal RNA (16S rRNA) and 24 different proteins. The 50S large subunit contains 3 rRNA molecules (23S, 5S and 4.5S rRNA) and 33 different proteins.

Its subcellular location is the plastid. The protein resides in the chloroplast. In terms of biological role, component of the chloroplast ribosome (chloro-ribosome), a dedicated translation machinery responsible for the synthesis of chloroplast genome-encoded proteins, including proteins of the transcription and translation machinery and components of the photosynthetic apparatus. The polypeptide is Small ribosomal subunit protein uS15c (rps15) (Spinacia oleracea (Spinach)).